The chain runs to 79 residues: Small proline-rich protein 4 (79 aa).

The segment covering 1–26 (MSSQQQQRQQQQCPPQRAQQQQVKQP) has biased composition (low complexity). The tract at residues 1 to 79 (MSSQQQQRQQ…AQQASKSKQK (79 aa)) is disordered. The span at 66–79 (KCPSAQQASKSKQK) shows a compositional bias: polar residues.

This sequence belongs to the cornifin (SPRR) family. Post-translationally, cross-linked to membrane proteins by transglutaminase.

It localises to the cytoplasm. The protein resides in the cell cortex. In terms of biological role, cross-linked envelope protein of keratinocytes. Involved in UV-induced cornification. In Homo sapiens (Human), this protein is Small proline-rich protein 4 (SPRR4).